A 76-amino-acid chain; its full sequence is Bomanin Tailed 2 (76 aa).

Positions 1-22 are cleaved as a signal peptide; that stretch reads MKALQVAGTLMLLFCLLAAVNA. Positions 23 to 24 are cleaved as a propeptide — removed by a dipeptidylpeptidase; the sequence is TP. A disulfide bridge connects residues C33 and C36.

It belongs to the bomanin family.

The protein localises to the secreted. Secreted immune-induced peptide induced by Toll signaling. Has a role in resistance to bacterial and fungal infections. The strength of antimicrobial activity appears to correlate with the overall level of expression. This Drosophila melanogaster (Fruit fly) protein is Bomanin Tailed 2.